A 301-amino-acid chain; its full sequence is uncharacterized protein (301 aa).

2 disordered regions span residues 167–186 (DVHL…PKER) and 225–244 (ASES…EGAS). Residues 170 to 181 (LNSTTPPHTAQV) show a composition bias toward polar residues. Residues 226 to 237 (SESSLETSSVSS) are compositionally biased toward low complexity.

This is an uncharacterized protein from Mus musculus (Mouse).